Consider the following 764-residue polypeptide: 5-methyltetrahydropteroyltriglutamate--homocysteine methyltransferase (764 aa).

5-methyltetrahydropteroyltri-L-glutamate-binding positions include 16–19 (RELK) and K121. Residues 440–442 (IGS) and E493 contribute to the L-homocysteine site. L-methionine contacts are provided by residues 440-442 (IGS) and E493. 5-methyltetrahydropteroyltri-L-glutamate is bound by residues 524-525 (RC) and W570. Residue D608 coordinates L-homocysteine. D608 lines the L-methionine pocket. E614 lines the 5-methyltetrahydropteroyltri-L-glutamate pocket. Zn(2+) is bound by residues H650, C652, and E674. H703 serves as the catalytic Proton donor. C735 lines the Zn(2+) pocket.

This sequence belongs to the vitamin-B12 independent methionine synthase family. Zn(2+) is required as a cofactor.

The catalysed reaction is 5-methyltetrahydropteroyltri-L-glutamate + L-homocysteine = tetrahydropteroyltri-L-glutamate + L-methionine. It participates in amino-acid biosynthesis; L-methionine biosynthesis via de novo pathway; L-methionine from L-homocysteine (MetE route): step 1/1. In terms of biological role, catalyzes the transfer of a methyl group from 5-methyltetrahydrofolate to homocysteine resulting in methionine formation. This is 5-methyltetrahydropteroyltriglutamate--homocysteine methyltransferase from Burkholderia ambifaria (strain ATCC BAA-244 / DSM 16087 / CCUG 44356 / LMG 19182 / AMMD) (Burkholderia cepacia (strain AMMD)).